The primary structure comprises 284 residues: Tropomyosin beta chain (284 aa).

Position 1 is an N-acetylmethionine (methionine 1). A coiled-coil region spans residues 1–284; that stretch reads MEAIKKKMQM…DNALNDITSL (284 aa). Basic and acidic residues-rich tracts occupy residues 22 to 40 and 51 to 66; these read AEQA…KQLE and KGTE…SVKE. Positions 22-66 are disordered; the sequence is AEQAEADKKQAEDRCKQLEEEQQGLQKKLKGTEDEVEKYSESVKE.

It belongs to the tropomyosin family. As to quaternary structure, homodimer. Heterodimer of an alpha (TPM1, TPM3 or TPM4) and a beta (TPM2) chain.

The protein localises to the cytoplasm. It localises to the cytoskeleton. Functionally, binds to actin filaments in muscle and non-muscle cells. Plays a central role, in association with the troponin complex, in the calcium dependent regulation of vertebrate striated muscle contraction. Smooth muscle contraction is regulated by interaction with caldesmon. In non-muscle cells is implicated in stabilizing cytoskeleton actin filaments. This is Tropomyosin beta chain (TPM2) from Gallus gallus (Chicken).